The primary structure comprises 498 residues: uncharacterized protein (498 aa).

This is an uncharacterized protein from Acanthamoeba polyphaga (Amoeba).